We begin with the raw amino-acid sequence, 143 residues long: Large ribosomal subunit protein uL11 (143 aa).

It belongs to the universal ribosomal protein uL11 family. As to quaternary structure, part of the ribosomal stalk of the 50S ribosomal subunit. Interacts with L10 and the large rRNA to form the base of the stalk. L10 forms an elongated spine to which L12 dimers bind in a sequential fashion forming a multimeric L10(L12)X complex. In terms of processing, one or more lysine residues are methylated.

Functionally, forms part of the ribosomal stalk which helps the ribosome interact with GTP-bound translation factors. In Rhizobium johnstonii (strain DSM 114642 / LMG 32736 / 3841) (Rhizobium leguminosarum bv. viciae), this protein is Large ribosomal subunit protein uL11.